The chain runs to 1872 residues: Plexin-A3 (1872 aa).

An N-terminal signal peptide occupies residues 1–19; it reads MPTVCLLPLLFFTIGGCLG. The Sema domain maps to 20–489; the sequence is SSRPFRTFVV…SEKQVSQLPV (470 aa). Topologically, residues 20–1220 are extracellular; it reads SSRPFRTFVV…ITADRALTLP (1201 aa). An N-linked (GlcNAc...) asparagine glycan is attached at Asn60. Disulfide bonds link Cys78-Cys87, Cys113-Cys121, Cys267-Cys388, Cys283-Cys339, Cys357-Cys376, Cys492-Cys509, Cys498-Cys540, Cys501-Cys518, and Cys512-Cys524. A glycan (N-linked (GlcNAc...) asparagine) is linked at Asn549. Cysteines 575 and 595 form a disulfide. IPT/TIG domains lie at 841–934, 936–1021, 1024–1123, and 1126–1212; these read PRIT…YSFV, PTFD…YTYT, PTVT…FTYY, and PSFE…LHIT. A glycan (N-linked (GlcNAc...) asparagine) is linked at Asn1163. A helical membrane pass occupies residues 1221–1241; sequence AMVGLAAGGGLLLLAITVVLV. Residues 1240 to 1294 adopt a coiled-coil conformation; that stretch reads LVAYKRKTQDADRTLKRLQLQMDNLESRVALECKEAFAELQTDINELTNHMDGVQ. Topologically, residues 1242–1872 are cytoplasmic; sequence AYKRKTQDAD…QIITLVSSSS (631 aa). Position 1597 is a phosphoserine (Ser1597).

This sequence belongs to the plexin family. In terms of tissue distribution, detected in embryonic hindbrain, spinal cord, dorsal root ganglion, trigeminal ganglion and superior cervical ganglion. In newborns, detected throughout all layers of the hippocampus.

Its subcellular location is the cell membrane. Coreceptor for SEMA3A and SEMA3F. Necessary for signaling by class 3 semaphorins and subsequent remodeling of the cytoskeleton. Plays a role in axon guidance in the developing nervous system. Regulates the migration of sympathetic neurons, but not of neural crest precursors. Required for normal dendrite spine morphology in pyramidal neurons. May play a role in regulating semaphorin-mediated programmed cell death in the developing nervous system. Class 3 semaphorins bind to a complex composed of a neuropilin and a plexin. The plexin modulates the affinity of the complex for specific semaphorins, and its cytoplasmic domain is required for the activation of down-stream signaling events in the cytoplasm. The protein is Plexin-A3 (Plxna3) of Mus musculus (Mouse).